We begin with the raw amino-acid sequence, 313 residues long: Serine/threonine-protein phosphatase PP2A-3 catalytic subunit (313 aa).

The Mn(2+) site is built by Asp61, His63, Asp89, and Asn121. His122 (proton donor) is an active-site residue. Mn(2+)-binding residues include His171 and His245. Leu313 carries the post-translational modification Leucine methyl ester.

Belongs to the PPP phosphatase family. PP-2A subfamily. As to quaternary structure, PP2A consists of a common heterodimeric core enzyme, composed of a 36 kDa catalytic subunit (subunit C) and a 65 kDa constant regulatory subunit (subunit A), that associates with a variety of regulatory subunits such as subunits B (the R2/B/PR55/B55, R3/B''/PR72/PR130/PR59 and R5/B'/B56 families). Interacts with ACR4. Interacts with TAP46. Interacts with SIC/RON3. Requires Mn(2+) as cofactor. Reversibly methyl esterified on Leu-313 by leucine carboxyl methyltransferase 1 (LCMT1) and pectin methylesterase 1 (PME1). Carboxyl methylation influences the affinity of the catalytic subunit for the different regulatory subunits, thereby modulating the PP2A holoenzyme's substrate specificity, enzyme activity and cellular localization. In terms of processing, phosphorylation of either threonine (by autophosphorylation-activated protein kinase) or tyrosine results in inactivation of the phosphatase. Auto-dephosphorylation has been suggested as a mechanism for reactivation.

Its subcellular location is the cytoplasm. It carries out the reaction O-phospho-L-seryl-[protein] + H2O = L-seryl-[protein] + phosphate. The enzyme catalyses O-phospho-L-threonyl-[protein] + H2O = L-threonyl-[protein] + phosphate. Functionally, functions redundantly with PP2A4, and is involved in establishing auxin gradients, apical-basal axis of polarity and root and shoot apical meristem during embryogenesis. May dephosphorylate PIN1 and regulate its subcellular distribution for polar auxin transport. Involved in the regulation of formative cell division in roots by dephosphorylating ACR4 protein kinase. The protein is Serine/threonine-protein phosphatase PP2A-3 catalytic subunit of Arabidopsis thaliana (Mouse-ear cress).